We begin with the raw amino-acid sequence, 1133 residues long: MKSKVDKPVTNGAPNATKTKAKEDRKRAKTQKSEADSQIPAKILKKSKKEKPAETEEKENTASNANLKVSQINKAVFVVFKKMQGSQLTKKMINSLITLLRDDTNAEQRTATTGYVLKRLIRSTGADDMKTVSLAASYIHCILNAVPAIDAFEVLETLKRDLAVGSQQRGKEDSLAAVGQLVTAFCILQTPQFAKAEPKLVTAVFQILAAQLKGREYLVSLCGDILAVSFKQLPAAIFEEYVWPLLQPELNKPLSGLKVNTCDVLLAVHLTFSSVLGRENILASLWPKKPVYTQLFDLYFSGSTIHSDGVYARLASFLVNGGKDMLAAWQQYIDSKQPLKLNAAKACAIQVLSHVLLNFKPREEQLILDIFTPTCVQFLLHECSSVKWDKGEGKKPSLKKLKEICFKFEGSLVLCYEKQFQNDDNKLHLLLKLLEHTLQLDSVISLPRFCQKLINQLSVESLHKLYDYYNNKLYSLEDEDRVSRVHCLNQMQLILNHSKLSQTAKWRQKQLNYLLLAGLFHLDASKKPCEAAQASAFSRQCAARCEEIFLGSLLHKCSGLPGLCQLLQKTLSYLNKELGQPDAESKLRSPRDESLQKAWKQVEKLLERPSKESDVVGQSFEALILFVSLALCTKIPPSITVLEDLIICRKNALQKSKEQVNEELKWQDVLTDALLQLLLQTGHFWREFVQLVATALIPHLEHGNLEQVLEVLNMNKNPLSKKSDGEEESDDELDKEESLKDSSDDSEDEDEDEEEDEGEDDAESHLAQIRESVRQALVNDGDADDDGASSVDWNDVDEEQGERLNAALERSFQMFRPKSRKAQEKERPTKSERIDSTNLLHFRIRALDLLELFITKKPTQSVILDVLHCVFQVYSHCAADSKLQSLREASLKLLKKILARNIELKENQSTAPILEAIEQLMSSGEEHSEEDQENGKQPASRQAKRDIIIWRDRCFAYLVSQASADGEPKKSAVWPLLVEFLELWVAKRRSRLSLASFEALFQSGQWQGVAPLAVVLASHLDVQKTRSFRRAQILKLLSEQGRRLEVAFKDNNSSSKKFEKQIARYVNQLETKASSSKELNLLLKILAQGGEKWQKLREQIQLVAKDLQPNKKVAKQKKQAAAKPMVVEDEEST.

Disordered stretches follow at residues 1 to 62 (MKSK…ENTA), 718 to 764 (PLSK…DAES), 924 to 943 (GEEH…SRQA), and 1111 to 1133 (KKVA…EEST). Composition is skewed to basic and acidic residues over residues 20-35 (KAKE…KSEA) and 50-60 (EKPAETEEKEN). Composition is skewed to acidic residues over residues 725-735 (GEEESDDELDK) and 744-762 (DDSE…EDDA).

It belongs to the MYBBP1A family. In terms of assembly, interacts with nclb.

It is found in the cytoplasm. It localises to the nucleus. The protein localises to the nucleolus. In terms of biological role, has a role in rRNA biogenesis, cell proliferation and tissue growth by contributing to the localization of nclb to the nucleolus. This Drosophila melanogaster (Fruit fly) protein is Myb-binding protein 1A.